A 93-amino-acid chain; its full sequence is Photosystem I iron-sulfur center (93 aa).

2 4Fe-4S ferredoxin-type domains span residues 13 to 43 (KDHE…MVPS) and 50 to 80 (QVVT…IRVY). The [4Fe-4S] cluster site is built by cysteine 23, cysteine 26, cysteine 29, cysteine 33, cysteine 60, cysteine 63, cysteine 66, and cysteine 70.

In terms of assembly, the eukaryotic PSI reaction center is composed of at least 11 subunits. [4Fe-4S] cluster is required as a cofactor.

The protein resides in the plastid. The protein localises to the chloroplast thylakoid membrane. It carries out the reaction reduced [plastocyanin] + hnu + oxidized [2Fe-2S]-[ferredoxin] = oxidized [plastocyanin] + reduced [2Fe-2S]-[ferredoxin]. Apoprotein for the two 4Fe-4S centers FA and FB of photosystem I (PSI); essential for photochemical activity. FB is the terminal electron acceptor of PSI, donating electrons to ferredoxin. The C-terminus interacts with PsaA/B/D and helps assemble the protein into the PSI complex. Required for binding of PsaD and PsaE to PSI. PSI is a plastocyanin-ferredoxin oxidoreductase, converting photonic excitation into a charge separation, which transfers an electron from the donor P700 chlorophyll pair to the spectroscopically characterized acceptors A0, A1, FX, FA and FB in turn. The protein is Photosystem I iron-sulfur center of Bigelowiella natans (Pedinomonas minutissima).